The chain runs to 189 residues: Elongation factor P (189 aa).

The protein belongs to the elongation factor P family.

Its subcellular location is the cytoplasm. Its pathway is protein biosynthesis; polypeptide chain elongation. Involved in peptide bond synthesis. Stimulates efficient translation and peptide-bond synthesis on native or reconstituted 70S ribosomes in vitro. Probably functions indirectly by altering the affinity of the ribosome for aminoacyl-tRNA, thus increasing their reactivity as acceptors for peptidyl transferase. This Ehrlichia ruminantium (strain Gardel) protein is Elongation factor P.